Reading from the N-terminus, the 383-residue chain is 1-deoxy-D-xylulose 5-phosphate reductoisomerase (383 aa).

NADPH is bound by residues Thr10, Gly11, Ser12, Ile13, Asn38, and Asn121. A 1-deoxy-D-xylulose 5-phosphate-binding site is contributed by Lys122. Glu123 lines the NADPH pocket. Asp147 is a Mn(2+) binding site. Ser148, Glu149, Ser172, and His195 together coordinate 1-deoxy-D-xylulose 5-phosphate. Residue Glu149 coordinates Mn(2+). NADPH is bound at residue Gly201. Ser208, Asn213, Lys214, and Glu217 together coordinate 1-deoxy-D-xylulose 5-phosphate. Position 217 (Glu217) interacts with Mn(2+).

Belongs to the DXR family. Requires Mg(2+) as cofactor. It depends on Mn(2+) as a cofactor.

It carries out the reaction 2-C-methyl-D-erythritol 4-phosphate + NADP(+) = 1-deoxy-D-xylulose 5-phosphate + NADPH + H(+). Its pathway is isoprenoid biosynthesis; isopentenyl diphosphate biosynthesis via DXP pathway; isopentenyl diphosphate from 1-deoxy-D-xylulose 5-phosphate: step 1/6. Catalyzes the NADPH-dependent rearrangement and reduction of 1-deoxy-D-xylulose-5-phosphate (DXP) to 2-C-methyl-D-erythritol 4-phosphate (MEP). The chain is 1-deoxy-D-xylulose 5-phosphate reductoisomerase from Ruthia magnifica subsp. Calyptogena magnifica.